Consider the following 73-residue polypeptide: MGQASKVFGKQITYSVSPFQQKLFVNYFKNAIPHLRRGVKDNFFCSVPYFAALYITVNWANETYHNEMKDHWY.

Residues 1–42 lie on the Mitochondrial matrix side of the membrane; sequence MGQASKVFGKQITYSVSPFQQKLFVNYFKNAIPHLRRGVKDN. Residues 43–60 traverse the membrane as a helical segment; that stretch reads FFCSVPYFAALYITVNWA. At 61-73 the chain is on the mitochondrial intermembrane side; the sequence is NETYHNEMKDHWY.

Belongs to the UQCRQ/QCR8 family. In terms of assembly, component of the ubiquinol-cytochrome c oxidoreductase (cytochrome b-c1 complex, complex III, CIII), a multisubunit enzyme composed of 3 respiratory subunits cytochrome b, cytochrome c1 and Rieske protein, 2 core protein subunits, and additional low-molecular weight protein subunits. The complex exists as an obligatory dimer and forms supercomplexes (SCs) in the inner mitochondrial membrane with cytochrome c oxidase (complex IV, CIV).

Its subcellular location is the mitochondrion inner membrane. Its function is as follows. Component of the ubiquinol-cytochrome c oxidoreductase, a multisubunit transmembrane complex that is part of the mitochondrial electron transport chain which drives oxidative phosphorylation. The respiratory chain contains 3 multisubunit complexes succinate dehydrogenase (complex II, CII), ubiquinol-cytochrome c oxidoreductase (cytochrome b-c1 complex, complex III, CIII) and cytochrome c oxidase (complex IV, CIV), that cooperate to transfer electrons derived from NADH and succinate to molecular oxygen, creating an electrochemical gradient over the inner membrane that drives transmembrane transport and the ATP synthase. The cytochrome b-c1 complex catalyzes electron transfer from ubiquinol to cytochrome c, linking this redox reaction to translocation of protons across the mitochondrial inner membrane, with protons being carried across the membrane as hydrogens on the quinol. In the process called Q cycle, 2 protons are consumed from the matrix, 4 protons are released into the intermembrane space and 2 electrons are passed to cytochrome c. This chain is Probable cytochrome b-c1 complex subunit 8, found in Dictyostelium discoideum (Social amoeba).